The sequence spans 171 residues: Large ribosomal subunit protein uL24 (171 aa).

A large ribosomal subunit protein uL24 region spans residues 1–124 (MNIKTGDTVV…AKPAKTKAEK (124 aa)). Residues 108-171 (GQTLDKAAKP…SVQKKGASGK (64 aa)) form a disordered region. The tract at residues 125-171 (VEKAATSSTDKPAKVTKAAKEAKPVKAVKSQKVEKNTSVQKKGASGK) is unknown.

The protein belongs to the universal ribosomal protein uL24 family. As to quaternary structure, part of the 50S ribosomal subunit.

Its function is as follows. One of two assembly initiator proteins, it binds directly to the 5'-end of the 23S rRNA, where it nucleates assembly of the 50S subunit. Functionally, one of the proteins that surrounds the polypeptide exit tunnel on the outside of the subunit. The protein is Large ribosomal subunit protein uL24 of Acholeplasma laidlawii (strain PG-8A).